The sequence spans 254 residues: MEAKPRVKVVLLDIEGTVCPISFVKDVLFPYALAALPETLSTEWDSSSFLPYRSAFPPEHSSTPEALLSHVRDLMAQDLKIPYLKSLQGYLWLRGYESGTLKCPLFPDVYPAMKKWKENGAKICIYSSGSVAAQKLLWRYTAEGDLRGCIWNGVDGAEEIEGGYWDTVNAGLKQESTSYEKIAKANRALGEVGEWLFLSDNVKEVRAAKESGMKSFVVVREGNADVSVEEKNRQVLITSFREVEAMVEVTGESA.

Mg(2+)-binding residues include D13 and E15. Substrate contacts are provided by residues 127–128 (SS) and K173. D200 is a binding site for Mg(2+).

It belongs to the HAD-like hydrolase superfamily. MasA/MtnC family. Monomer. Mg(2+) is required as a cofactor.

The protein resides in the cytoplasm. It localises to the nucleus. The enzyme catalyses 5-methylsulfanyl-2,3-dioxopentyl phosphate + H2O = 1,2-dihydroxy-5-(methylsulfanyl)pent-1-en-3-one + phosphate. The protein operates within amino-acid biosynthesis; L-methionine biosynthesis via salvage pathway; L-methionine from S-methyl-5-thio-alpha-D-ribose 1-phosphate: step 3/6. It participates in amino-acid biosynthesis; L-methionine biosynthesis via salvage pathway; L-methionine from S-methyl-5-thio-alpha-D-ribose 1-phosphate: step 4/6. Functionally, bifunctional enzyme that catalyzes the enolization of 2,3-diketo-5-methylthiopentyl-1-phosphate (DK-MTP-1-P) into the intermediate 2-hydroxy-3-keto-5-methylthiopentenyl-1-phosphate (HK-MTPenyl-1-P), which is then dephosphorylated to form the acireductone 1,2-dihydroxy-3-keto-5-methylthiopentene (DHK-MTPene). The protein is Enolase-phosphatase E1 (utr4) of Sclerotinia sclerotiorum (strain ATCC 18683 / 1980 / Ss-1) (White mold).